A 346-amino-acid chain; its full sequence is Glycerol-3-phosphate dehydrogenase [NAD(P)+] (346 aa).

4 residues coordinate NADPH: serine 15, tryptophan 16, arginine 36, and lysine 110. Lysine 110, glycine 139, and serine 141 together coordinate sn-glycerol 3-phosphate. Alanine 143 is an NADPH binding site. Sn-glycerol 3-phosphate contacts are provided by lysine 194, aspartate 247, serine 257, arginine 258, and asparagine 259. Lysine 194 (proton acceptor) is an active-site residue. Arginine 258 serves as a coordination point for NADPH. The NADPH site is built by valine 282 and glutamate 284.

It belongs to the NAD-dependent glycerol-3-phosphate dehydrogenase family.

It localises to the cytoplasm. It carries out the reaction sn-glycerol 3-phosphate + NAD(+) = dihydroxyacetone phosphate + NADH + H(+). It catalyses the reaction sn-glycerol 3-phosphate + NADP(+) = dihydroxyacetone phosphate + NADPH + H(+). The protein operates within membrane lipid metabolism; glycerophospholipid metabolism. Functionally, catalyzes the reduction of the glycolytic intermediate dihydroxyacetone phosphate (DHAP) to sn-glycerol 3-phosphate (G3P), the key precursor for phospholipid synthesis. The chain is Glycerol-3-phosphate dehydrogenase [NAD(P)+] from Xylella fastidiosa (strain Temecula1 / ATCC 700964).